Consider the following 241-residue polypeptide: Attacin-C (241 aa).

The N-terminal stretch at M1–A21 is a signal peptide. The propeptide occupies L22–P23. At Q24 the chain carries Pyrrolidone carboxylic acid. An O-linked (GalNAc...) threonine glycan is attached at T39. Residue S127 is modified to Phosphoserine.

This sequence belongs to the attacin/sarcotoxin-2 family. In terms of tissue distribution, hemolymph (at protein level).

Its subcellular location is the secreted. Functionally, has antimicrobial activity in synergy with other peptides. Strongest activity observed against E.cloacae. The sequence is that of Attacin-C from Drosophila melanogaster (Fruit fly).